The following is a 289-amino-acid chain: RNA-binding protein CP29B, chloroplastic (289 aa).

The N-terminal 62 residues, 1–62, are a transit peptide targeting the chloroplast; it reads MAASASSLAL…NSPASRFARN (62 aa). Phosphoserine is present on residues serine 6 and serine 12. The residue at position 63 (valine 63) is an N-acetylvaline. The RRM 1 domain maps to 91 to 169; sequence LKLFVGNLPF…RPLRVNAGPP (79 aa). A disordered region spans residues 158 to 199; sequence DGRPLRVNAGPPPPKREDGFSRGPRSSFGSSGSGYGGGGGSG. Residues 170 to 203 are linker (Gly-rich); sequence PPKREDGFSRGPRSSFGSSGSGYGGGGGSGAGSG. Positions 178 to 187 are enriched in low complexity; it reads SRGPRSSFGS. A compositionally biased stretch (gly residues) spans 188 to 199; that stretch reads SGSGYGGGGGSG. An RRM 2 domain is found at 204–282; that stretch reads NRVYVGNLSW…RQIRVSEAEA (79 aa).

ADP-ribosylated by the Pseudomonas syringae type III effector HopU1. ADP-ribosylation reduces the ability of the protein to bind RNA. In terms of processing, phosphorylated on tyrosine residues after treatment with abscisic acid (ABA). Phosphorylation may reduce the ability of the protein to bind RNA.

Its subcellular location is the plastid. The protein resides in the chloroplast. Its function is as follows. Could be involved in splicing and/or processing of chloroplast RNA's. The chain is RNA-binding protein CP29B, chloroplastic from Arabidopsis thaliana (Mouse-ear cress).